The sequence spans 318 residues: Acetyl-coenzyme A carboxylase carboxyl transferase subunit alpha (318 aa).

The 255-residue stretch at 38 to 292 (KLEKRLAKLE…NKTITKSLHA (255 aa)) folds into the CoA carboxyltransferase C-terminal domain.

It belongs to the AccA family. As to quaternary structure, acetyl-CoA carboxylase is a heterohexamer composed of biotin carboxyl carrier protein (AccB), biotin carboxylase (AccC) and two subunits each of ACCase subunit alpha (AccA) and ACCase subunit beta (AccD).

The protein resides in the cytoplasm. It catalyses the reaction N(6)-carboxybiotinyl-L-lysyl-[protein] + acetyl-CoA = N(6)-biotinyl-L-lysyl-[protein] + malonyl-CoA. Its pathway is lipid metabolism; malonyl-CoA biosynthesis; malonyl-CoA from acetyl-CoA: step 1/1. In terms of biological role, component of the acetyl coenzyme A carboxylase (ACC) complex. First, biotin carboxylase catalyzes the carboxylation of biotin on its carrier protein (BCCP) and then the CO(2) group is transferred by the carboxyltransferase to acetyl-CoA to form malonyl-CoA. In Listeria monocytogenes serotype 4b (strain CLIP80459), this protein is Acetyl-coenzyme A carboxylase carboxyl transferase subunit alpha.